We begin with the raw amino-acid sequence, 426 residues long: tRNA modification GTPase MnmE (426 aa).

(6S)-5-formyl-5,6,7,8-tetrahydrofolate is bound by residues R20, E77, and M117. The TrmE-type G domain maps to 213 to 350 (GFEVAILGAP…LLTDIEGVLS (138 aa)). N223 contacts K(+). Residues 223 to 228 (NAGKST), 242 to 248 (SDVPGTT), and 267 to 270 (DTAG) contribute to the GTP site. Position 227 (S227) interacts with Mg(2+). K(+)-binding residues include S242, V244, and T247. A Mg(2+)-binding site is contributed by T248. K426 lines the (6S)-5-formyl-5,6,7,8-tetrahydrofolate pocket.

The protein belongs to the TRAFAC class TrmE-Era-EngA-EngB-Septin-like GTPase superfamily. TrmE GTPase family. In terms of assembly, homodimer. Heterotetramer of two MnmE and two MnmG subunits. K(+) serves as cofactor.

Its subcellular location is the cytoplasm. Exhibits a very high intrinsic GTPase hydrolysis rate. Involved in the addition of a carboxymethylaminomethyl (cmnm) group at the wobble position (U34) of certain tRNAs, forming tRNA-cmnm(5)s(2)U34. This is tRNA modification GTPase MnmE from Jannaschia sp. (strain CCS1).